Reading from the N-terminus, the 306-residue chain is Glutaminase (306 aa).

7 residues coordinate substrate: serine 64, asparagine 115, glutamate 159, asparagine 166, tyrosine 190, tyrosine 242, and valine 260.

It belongs to the glutaminase family. As to quaternary structure, homotetramer.

It catalyses the reaction L-glutamine + H2O = L-glutamate + NH4(+). This is Glutaminase from Aliivibrio fischeri (strain ATCC 700601 / ES114) (Vibrio fischeri).